A 641-amino-acid polypeptide reads, in one-letter code: UPF0329 protein ECU11_0030 (641 aa).

Positions 358 to 387 (RQRKREEETERSVKELVGDEEKAKSKEEKA) are enriched in basic and acidic residues. Residues 358-444 (RQRKREEETE…KGGKKKSKGG (87 aa)) form a disordered region. The span at 435 to 444 (KGGKKKSKGG) shows a compositional bias: basic residues.

This sequence belongs to the UPF0329 family.

The polypeptide is UPF0329 protein ECU11_0030 (Encephalitozoon cuniculi (strain GB-M1) (Microsporidian parasite)).